A 175-amino-acid polypeptide reads, in one-letter code: SsrA-binding protein (175 aa).

Disordered regions lie at residues 1-29 (MTRNPQPDRSKTAPKNAKRDPVASGERDA) and 152-175 (KRETDRRKTADRDAREAIARSRKS).

The protein belongs to the SmpB family.

Its subcellular location is the cytoplasm. In terms of biological role, required for rescue of stalled ribosomes mediated by trans-translation. Binds to transfer-messenger RNA (tmRNA), required for stable association of tmRNA with ribosomes. tmRNA and SmpB together mimic tRNA shape, replacing the anticodon stem-loop with SmpB. tmRNA is encoded by the ssrA gene; the 2 termini fold to resemble tRNA(Ala) and it encodes a 'tag peptide', a short internal open reading frame. During trans-translation Ala-aminoacylated tmRNA acts like a tRNA, entering the A-site of stalled ribosomes, displacing the stalled mRNA. The ribosome then switches to translate the ORF on the tmRNA; the nascent peptide is terminated with the 'tag peptide' encoded by the tmRNA and targeted for degradation. The ribosome is freed to recommence translation, which seems to be the essential function of trans-translation. The sequence is that of SsrA-binding protein from Koribacter versatilis (strain Ellin345).